The chain runs to 532 residues: Glycerophosphocholine permease GIT4 (532 aa).

The next 6 helical transmembrane spans lie at 55–75 (LWPAFASGAGLFSDGYVNAGI), 98–118 (NIGSIGFVGTVVGQLSFGYIS), 126–146 (GMLTANVMLIFFTLMCAVASW), 150–170 (VQGFFACLTVWRFFLGIAIGA), 201–221 (AMIDFGFVVSSFVPLVLLWIF), and 229–249 (VWRLSIGLGVIPPLILFFIRL). N-linked (GlcNAc...) asparagine glycosylation is present at asparagine 266. A helical transmembrane segment spans residues 272-292 (WWLIIKFYWFRLTVVSLIWFI). N-linked (GlcNAc...) asparagine glycosylation is present at asparagine 314. A run of 3 helical transmembrane segments spans residues 321–341 (WGWSVVFNLFYMPGAFLGAFI), 349–369 (LTLAIGVGAQGIIGIAMSACL), and 375–395 (HVAGFVVVFGIFSTFGEFGPG). Residue asparagine 396 is glycosylated (N-linked (GlcNAc...) asparagine). 2 helical membrane-spanning segments follow: residues 416–436 (GIAAAIGKIGAFVGTWVFPAI) and 450–470 (VPFYVSSALCLFSAFLTIFFV).

Belongs to the major facilitator superfamily. Sugar transporter (TC 2.A.1.1) family.

It localises to the cell membrane. The catalysed reaction is sn-glycerol 3-phosphocholine(out) = sn-glycerol 3-phosphocholine(in). Its function is as follows. Glycerophosphodiester transporter that mediates uptake of glycerophosphocholine (GroPCho) with GIT3. Does not possess detectable glycerophosphoinositol (GroPIns) transport activity. The expanded ability to utilize GroPIns and GroPCho results from the organism's pathogenic nature and its need to occupy a variety of environments within its host organism. This possibility is buttressed by the fact that GroPIns and GroPCho are present and abundant in human fluids. This chain is Glycerophosphocholine permease GIT4, found in Candida albicans (strain SC5314 / ATCC MYA-2876) (Yeast).